A 120-amino-acid chain; its full sequence is MREKPKYLPPTLRDKNRYIAFQVIGERPFKKDEIKKAVWEASLSALGYLGSARAKPWFIKFDEKSQTGIVRVDRKHVEELRFALTMLTEINGSKVIFRTLGVSGTIKRLKRKFLAEYGWR.

This sequence belongs to the eukaryotic/archaeal RNase P protein component 2 family. As to quaternary structure, consists of a catalytic RNA component and at least 4-5 protein subunits.

Its subcellular location is the cytoplasm. It catalyses the reaction Endonucleolytic cleavage of RNA, removing 5'-extranucleotides from tRNA precursor.. In terms of biological role, part of ribonuclease P, a protein complex that generates mature tRNA molecules by cleaving their 5'-ends. The polypeptide is Ribonuclease P protein component 2 (Thermococcus kodakarensis (strain ATCC BAA-918 / JCM 12380 / KOD1) (Pyrococcus kodakaraensis (strain KOD1))).